Consider the following 54-residue polypeptide: Putative neurotoxin-I (54 aa).

Cystine bridges form between Cys20–Cys42, Cys28–Cys51, and Cys32–Cys53.

As to expression, expressed by the venom gland.

It is found in the secreted. The protein is Putative neurotoxin-I of Lychas mucronatus (Chinese swimming scorpion).